We begin with the raw amino-acid sequence, 358 residues long: UDP-N-acetylglucosamine--N-acetylmuramyl-(pentapeptide) pyrophosphoryl-undecaprenol N-acetylglucosamine transferase (358 aa).

Residues 11-13 (TGG), N120, R161, S188, and Q282 contribute to the UDP-N-acetyl-alpha-D-glucosamine site.

It belongs to the glycosyltransferase 28 family. MurG subfamily.

Its subcellular location is the cell inner membrane. It carries out the reaction di-trans,octa-cis-undecaprenyl diphospho-N-acetyl-alpha-D-muramoyl-L-alanyl-D-glutamyl-meso-2,6-diaminopimeloyl-D-alanyl-D-alanine + UDP-N-acetyl-alpha-D-glucosamine = di-trans,octa-cis-undecaprenyl diphospho-[N-acetyl-alpha-D-glucosaminyl-(1-&gt;4)]-N-acetyl-alpha-D-muramoyl-L-alanyl-D-glutamyl-meso-2,6-diaminopimeloyl-D-alanyl-D-alanine + UDP + H(+). It participates in cell wall biogenesis; peptidoglycan biosynthesis. In terms of biological role, cell wall formation. Catalyzes the transfer of a GlcNAc subunit on undecaprenyl-pyrophosphoryl-MurNAc-pentapeptide (lipid intermediate I) to form undecaprenyl-pyrophosphoryl-MurNAc-(pentapeptide)GlcNAc (lipid intermediate II). The sequence is that of UDP-N-acetylglucosamine--N-acetylmuramyl-(pentapeptide) pyrophosphoryl-undecaprenol N-acetylglucosamine transferase from Synechococcus sp. (strain CC9605).